A 108-amino-acid polypeptide reads, in one-letter code: Parvalbumin beta 2 (108 aa).

N-acetylalanine is present on Ala1. EF-hand domains are found at residues 38 to 73 and 77 to 108; these read KSAADIKKVFGIIDQDKSDFVEEDELKLFLQNFSAG and LTDAETATFLKAGDSDGDGKIGVDEFAAMVKG. Ca(2+) is bound by residues Asp51, Asp53, Ser55, Phe57, Glu59, Glu62, Asp90, Asp92, Asp94, Lys96, and Glu101.

It belongs to the parvalbumin family.

Functionally, in muscle, parvalbumin is thought to be involved in relaxation after contraction. It binds two calcium ions. The polypeptide is Parvalbumin beta 2 (Merluccius bilinearis (Silver hake)).